We begin with the raw amino-acid sequence, 254 residues long: Galactitol 2-dehydrogenase (L-tagatose-forming) (254 aa).

NAD(+) contacts are provided by residues 21–23, Asp-42, 66–67, Tyr-159, Lys-163, and 192–194; these read SGI, DV, and VAT. Tyr-159 (proton acceptor) is an active-site residue. Residue Trp-254 coordinates Mg(2+).

Belongs to the short-chain dehydrogenases/reductases (SDR) family. Homotetramer. It depends on a divalent metal cation as a cofactor.

It carries out the reaction galactitol + NAD(+) = keto-L-tagatose + NADH + H(+). Its activity is regulated as follows. Inhibited by the chelating agents EDTA and alpha,alpha'-dipyridyl. Inhibited by Zn(2+) and Fe(2+). In terms of biological role, catalyzes the interconversion of galactitol to the rare sugar L-tagatose. Shows activity with a wide range of substrates, and catalyzes the oxidation of a variety of polyvalent aliphatic alcohols and polyols to the corresponding ketones and ketoses, respectively, and in the reverse reaction, it reduces ketones with high stereoselectivity yielding the corresponding S-configurated alcohols. Shows high activity with D-threitol, xylitol, 1,2-hexanediol, 1,2-pentanediol, 2-hexanol, L-erythrulose, D-ribulose and acetoin. Specific for NAD(+). This is Galactitol 2-dehydrogenase (L-tagatose-forming) from Cereibacter sphaeroides (Rhodobacter sphaeroides).